A 205-amino-acid polypeptide reads, in one-letter code: Large ribosomal subunit protein uL4 (205 aa).

The disordered stretch occupies residues 44 to 77 (KRQGTSKVKNRSAVRGGGKKPWRQKGTGRARQGS). The segment covering 51-71 (VKNRSAVRGGGKKPWRQKGTG) has biased composition (basic residues).

It belongs to the universal ribosomal protein uL4 family. As to quaternary structure, part of the 50S ribosomal subunit.

Its function is as follows. One of the primary rRNA binding proteins, this protein initially binds near the 5'-end of the 23S rRNA. It is important during the early stages of 50S assembly. It makes multiple contacts with different domains of the 23S rRNA in the assembled 50S subunit and ribosome. Forms part of the polypeptide exit tunnel. The sequence is that of Large ribosomal subunit protein uL4 from Lactobacillus delbrueckii subsp. bulgaricus (strain ATCC 11842 / DSM 20081 / BCRC 10696 / JCM 1002 / NBRC 13953 / NCIMB 11778 / NCTC 12712 / WDCM 00102 / Lb 14).